Reading from the N-terminus, the 784-residue chain is MASLDDPGEVREGFLCPLCLKDLQSFYQLHSHYEEEHSGEDRDVKGQIKSLVQKAKKAKDRLLKREGDDRAESGTQGYESFSYGGVDPYMWEPQELGAVRSHLSDFKKHRAARIDHYVVEVNKLIIRLEKLTAFDRTNTESAKIRAIEKSVVPWVNDQDVPFCPDCGNKFSIRNRRHHCRLCGSIMCKKCMELISLPLANKLTSASKESLSTHTSPSQSPNSVHGSRRGSISSMSSVSSVLDEKDDDRIRCCTHCKDTLLKREQQIDEKEHTPDIVKLYEKLRLCMEKVDQKAPEYIRMAASLNAGETTYSLEHASDLRVEVQKVYELIDALSKKILTLGLNQDPPPHPSNLRLQRMIRYSATLFVQEKLLGLMSLPTKEQFEELKKKRKEEMERKRAVERQAALESQRRLEERQSGLASRAANGEVASLRRGPAPLRKAEGWLPLSGGQGQSEDSDPLLQQIHNITSFIRQAKAAGRMDEVRTLQENLRQLQDEYDQQQTEKAIELSRRQAEEEDLQREQLQMLRERELEREREQFRVASLHTRTRSLDFREIGPFQLEPSREPRTHLAYALDLGSSPVPSSTAPKTPSLSSTQPTRVWSGPPAVGQERLPQSSMPQQHEGPSLNPFDEEDLSSPMEEATTGPPAAGVSLDPSARILKEYNPFEEEDEEEEAVAGNPFIQPDSPAPNPFSEEDEHPQQRLSSPLVPGNPFEEPTCINPFEMDSDSGPEAEEPIEEELLLQQIDNIKAYIFDAKQCGRLDEVEVLTENLRELKHTLAKQKGGTD.

Position 2 is an N-acetylalanine (A2). S3 bears the Phosphoserine mark. The C2H2-type zinc-finger motif lies at 14-37; the sequence is FLCPLCLKDLQSFYQLHSHYEEEH. A necessary for the correct targeting to endosomes region spans residues 100–263; the sequence is RSHLSDFKKH…HCKDTLLKRE (164 aa). An FYVE-type zinc finger spans residues 157–260; sequence DQDVPFCPDC…CCTHCKDTLL (104 aa). Positions 163, 166, 179, 182, 187, and 190 each coordinate Zn(2+). Residues 207-224 are compositionally biased toward polar residues; that stretch reads KESLSTHTSPSQSPNSVH. The segment at 207–241 is disordered; the sequence is KESLSTHTSPSQSPNSVHGSRRGSISSMSSVSSVL. Residues S215, S219, S226, and S230 each carry the phosphoserine modification. Residues 228-240 show a composition bias toward low complexity; that stretch reads RGSISSMSSVSSV. Zn(2+) is bound by residues C252 and C255. Residues 264–500 form a necessary for interaction with RAB4A region; sequence QQIDEKEHTP…QLQDEYDQQQ (237 aa). A necessary for interaction with EHD1 region spans residues 264–784; sequence QQIDEKEHTP…TLAKQKGGTD (521 aa). Coiled-coil stretches lie at residues 378–414 and 472–531; these read TKEQ…LEER and QAKA…RELE. Positions 390 to 400 are enriched in basic and acidic residues; it reads KEEMERKRAVE. The tract at residues 390-429 is disordered; it reads KEEMERKRAVERQAALESQRRLEERQSGLASRAANGEVAS. Positions 496–515 constitute a UIM domain; the sequence is YDQQQTEKAIELSRRQAEEE. The disordered stretch occupies residues 574 to 732; the sequence is DLGSSPVPSS…DSDSGPEAEE (159 aa). Polar residues predominate over residues 579–598; it reads PVPSSTAPKTPSLSSTQPTR. Residues 627-784 form a necessary for interaction with RAB5A region; the sequence is PFDEEDLSSP…TLAKQKGGTD (158 aa). Residues 663–673 are compositionally biased toward acidic residues; it reads PFEEEDEEEEA. S684 is modified (phosphoserine). Residues 722–732 show a composition bias toward acidic residues; sequence MDSDSGPEAEE.

As to quaternary structure, interacts with EHD1, RAB4A, RAB5A, RAB14, RAB22A, RAB24 and VPS45. Binds simultaneously to RAB4A and RAB5A in vitro. Interacts with RAB4A and RAB5A that has been activated by GTP binding.

It localises to the cell membrane. The protein resides in the early endosome membrane. Functionally, rab4/Rab5 effector protein acting in early endocytic membrane fusion and membrane trafficking of recycling endosomes. Required for endosome fusion either homotypically or with clathrin coated vesicles. Plays a role in the lysosomal trafficking of CTSD/cathepsin D from the Golgi to lysosomes. Also promotes the recycling of transferrin directly from early endosomes to the plasma membrane. Binds phospholipid vesicles containing phosphatidylinositol 3-phosphate (PtdInsP3). Plays a role in the recycling of transferrin receptor to the plasma membrane. In Homo sapiens (Human), this protein is Rabenosyn-5.